The following is a 236-amino-acid chain: 2-C-methyl-D-erythritol 4-phosphate cytidylyltransferase (236 aa).

This sequence belongs to the IspD/TarI cytidylyltransferase family. IspD subfamily. In terms of assembly, homodimer.

It carries out the reaction 2-C-methyl-D-erythritol 4-phosphate + CTP + H(+) = 4-CDP-2-C-methyl-D-erythritol + diphosphate. It participates in isoprenoid biosynthesis; isopentenyl diphosphate biosynthesis via DXP pathway; isopentenyl diphosphate from 1-deoxy-D-xylulose 5-phosphate: step 2/6. In terms of biological role, catalyzes the formation of 4-diphosphocytidyl-2-C-methyl-D-erythritol from CTP and 2-C-methyl-D-erythritol 4-phosphate (MEP). This chain is 2-C-methyl-D-erythritol 4-phosphate cytidylyltransferase, found in Salmonella newport (strain SL254).